The chain runs to 200 residues: Protein Syd (200 aa).

The protein belongs to the Syd family.

Its subcellular location is the cell inner membrane. Interacts with the SecY protein in vivo. May bind preferentially to an uncomplexed state of SecY, thus functioning either as a chelating agent for excess SecY in the cell or as a regulatory factor that negatively controls the translocase function. This chain is Protein Syd, found in Colwellia psychrerythraea (strain 34H / ATCC BAA-681) (Vibrio psychroerythus).